The primary structure comprises 147 residues: Transcriptional regulator MraZ (147 aa).

SpoVT-AbrB domains follow at residues 5–50 (AVAL…PLTA) and 79–122 (AQEE…SDAG).

Belongs to the MraZ family. In terms of assembly, forms oligomers.

The protein resides in the cytoplasm. It is found in the nucleoid. The chain is Transcriptional regulator MraZ from Azoarcus sp. (strain BH72).